The chain runs to 462 residues: MIEVSAVAGYTPSVEISLTPREAPQMTKKLFVKTYGCQMNVYDSERMAEALGGEGYEQVNTPEGADMILLNTCHIREKAAEKMYSELGRLRPLRDANPDLKIGVAGCVAQAEGEEIMRRQPLVDLVVGPQTYHRLPKMMEAVNAGEKALDTDFPEEDKFLNLPKARATRGPTAFLTVQEGCDKFCAFCVVPYTRGAEVSRSAERLMAEARDLVDRGVREITLLGQNVNAYHGAGDGGTWGLARLIREMAKIDGLDRIRFTTSHPNDMEDDLIAAHGDCPELMPYLHLPVQAGSDKILKAMNRKHTAADYIRLIDRIRDARPDLHLSGDFIVGFPGETEEDFQATLDLVETVGYGTAYSFKYSARPGTPAAERTGQVSEAEASDRLQRLQALLTQQQRAAQDAMVGRRVKVLFEKPGRNPGQMIGKSEYLHSVHVDGPDTLRGQIAEVEIAESKTNSLTGRLV.

The 117-residue stretch at 28-144 (KKLFVKTYGC…LPKMMEAVNA (117 aa)) folds into the MTTase N-terminal domain. The [4Fe-4S] cluster site is built by Cys37, Cys73, Cys107, Cys181, Cys185, and Cys188. The Radical SAM core domain occupies 167–398 (ATRGPTAFLT…QALLTQQQRA (232 aa)). One can recognise a TRAM domain in the interval 401 to 462 (DAMVGRRVKV…KTNSLTGRLV (62 aa)).

It belongs to the methylthiotransferase family. MiaB subfamily. As to quaternary structure, monomer. Requires [4Fe-4S] cluster as cofactor.

Its subcellular location is the cytoplasm. The enzyme catalyses N(6)-dimethylallyladenosine(37) in tRNA + (sulfur carrier)-SH + AH2 + 2 S-adenosyl-L-methionine = 2-methylsulfanyl-N(6)-dimethylallyladenosine(37) in tRNA + (sulfur carrier)-H + 5'-deoxyadenosine + L-methionine + A + S-adenosyl-L-homocysteine + 2 H(+). In terms of biological role, catalyzes the methylthiolation of N6-(dimethylallyl)adenosine (i(6)A), leading to the formation of 2-methylthio-N6-(dimethylallyl)adenosine (ms(2)i(6)A) at position 37 in tRNAs that read codons beginning with uridine. This Jannaschia sp. (strain CCS1) protein is tRNA-2-methylthio-N(6)-dimethylallyladenosine synthase.